We begin with the raw amino-acid sequence, 217 residues long: Small ribosomal subunit protein uS3 (217 aa).

One can recognise a KH type-2 domain in the interval 38–106; the sequence is IRKFIQKELA…QVHINIIEIK (69 aa).

Belongs to the universal ribosomal protein uS3 family. Part of the 30S ribosomal subunit. Forms a tight complex with proteins S10 and S14.

Binds the lower part of the 30S subunit head. Binds mRNA in the 70S ribosome, positioning it for translation. This chain is Small ribosomal subunit protein uS3, found in Streptococcus uberis (strain ATCC BAA-854 / 0140J).